The following is a 108-amino-acid chain: uncharacterized protein (108 aa).

Residues phenylalanine 81 to tyrosine 108 are disordered. Positions glycine 97 to tyrosine 108 are enriched in acidic residues.

This is an uncharacterized protein from Saccharomyces cerevisiae (strain ATCC 204508 / S288c) (Baker's yeast).